A 145-amino-acid chain; its full sequence is Small ribosomal subunit protein uS19 (145 aa).

N-acetylalanine is present on Ala-2. A Glycyl lysine isopeptide (Lys-Gly) (interchain with G-Cter in SUMO2) cross-link involves residue Lys-108.

This sequence belongs to the universal ribosomal protein uS19 family. As to quaternary structure, component of the small ribosomal subunit.

It is found in the cytoplasm. Functionally, component of the small ribosomal subunit. The ribosome is a large ribonucleoprotein complex responsible for the synthesis of proteins in the cell. The chain is Small ribosomal subunit protein uS19 (RPS15) from Oryctolagus cuniculus (Rabbit).